A 153-amino-acid polypeptide reads, in one-letter code: 6,7-dimethyl-8-ribityllumazine synthase (153 aa).

Residues phenylalanine 22, 56-58 (AFE), and 80-82 (AVI) each bind 5-amino-6-(D-ribitylamino)uracil. Position 85–86 (85–86 (AT)) interacts with (2S)-2-hydroxy-3-oxobutyl phosphate. The active-site Proton donor is histidine 88. Phenylalanine 113 is a 5-amino-6-(D-ribitylamino)uracil binding site. (2S)-2-hydroxy-3-oxobutyl phosphate is bound at residue arginine 127.

It belongs to the DMRL synthase family.

It catalyses the reaction (2S)-2-hydroxy-3-oxobutyl phosphate + 5-amino-6-(D-ribitylamino)uracil = 6,7-dimethyl-8-(1-D-ribityl)lumazine + phosphate + 2 H2O + H(+). The protein operates within cofactor biosynthesis; riboflavin biosynthesis; riboflavin from 2-hydroxy-3-oxobutyl phosphate and 5-amino-6-(D-ribitylamino)uracil: step 1/2. Functionally, catalyzes the formation of 6,7-dimethyl-8-ribityllumazine by condensation of 5-amino-6-(D-ribitylamino)uracil with 3,4-dihydroxy-2-butanone 4-phosphate. This is the penultimate step in the biosynthesis of riboflavin. This is 6,7-dimethyl-8-ribityllumazine synthase from Clostridium tetani (strain Massachusetts / E88).